The primary structure comprises 538 residues: Probable bifunctional riboflavin biosynthesis protein RIBA 1, chloroplastic (538 aa).

Residues 1–16 (MSRLSSIYSQHRTSGL) are compositionally biased toward polar residues. Residues 1–29 (MSRLSSIYSQHRTSGLRSDRSIMPNSTSN) are disordered. The N-terminal 73 residues, 1 to 73 (MSRLSSIYSQ…NGQASPSKVV (73 aa)), are a transit peptide targeting the chloroplast. A DHBP synthase region spans residues 46–311 (RNFHISHAVG…IADLIRYRRK (266 aa)). Residues 134–135 (RE), D139, 249–253 (RAGHT), and E273 contribute to the D-ribulose 5-phosphate site. Mg(2+) is bound at residue E135. H252 serves as a coordination point for Mg(2+). Residues 312–530 (RDRLVERVCV…DGGIKKEQDQ (219 aa)) are GTP cyclohydrolase II. Residue 362–366 (RVHSE) participates in GTP binding. Residues C367, C378, and C380 each contribute to the Zn(2+) site. GTP contacts are provided by residues Q383, 406-408 (EGR), and T428. The active-site Proton acceptor; for GTP cyclohydrolase activity is D440. R442 acts as the Nucleophile; for GTP cyclohydrolase activity in catalysis. 2 residues coordinate GTP: T463 and K468. The disordered stretch occupies residues 506–538 (HVYGTRPSGNTSTLADGGIKKEQDQIDSASEQE).

It in the N-terminal section; belongs to the DHBP synthase family. In the C-terminal section; belongs to the GTP cyclohydrolase II family. Mg(2+) is required as a cofactor. The cofactor is Mn(2+). Requires Zn(2+) as cofactor.

It localises to the plastid. The protein localises to the chloroplast. It catalyses the reaction D-ribulose 5-phosphate = (2S)-2-hydroxy-3-oxobutyl phosphate + formate + H(+). The enzyme catalyses GTP + 4 H2O = 2,5-diamino-6-hydroxy-4-(5-phosphoribosylamino)-pyrimidine + formate + 2 phosphate + 3 H(+). It functions in the pathway cofactor biosynthesis; riboflavin biosynthesis; 2-hydroxy-3-oxobutyl phosphate from D-ribulose 5-phosphate: step 1/1. It participates in cofactor biosynthesis; riboflavin biosynthesis; 5-amino-6-(D-ribitylamino)uracil from GTP: step 1/4. Its function is as follows. Involved in riboflavin biosynthesis. Catalyzes both the conversion of D-ribulose 5-phosphate to formate and 3,4-dihydroxy-2-butanone 4-phosphate and the conversion of GTP to 2,5-diamino-6-ribosylamino-4(3H)-pyrimidinone 5'-phosphate (DARP), formate and pyrophosphate. This Oryza sativa subsp. japonica (Rice) protein is Probable bifunctional riboflavin biosynthesis protein RIBA 1, chloroplastic (RIBA1).